The primary structure comprises 189 residues: PTS system glucose-specific EIIA component (189 aa).

The PTS EIIA type-1 domain occupies 31 to 135 (DEAFAEKIVG…SVITPVVIAN (105 aa)). Residues His-68 and His-83 each contribute to the Zn(2+) site. His-83 acts as the Tele-phosphohistidine intermediate; for EIIA activity in catalysis. His-83 carries the phosphohistidine; by HPr modification.

As to quaternary structure, heterodimer with glycerol kinase (glpk). Zn(2+) is required as a cofactor.

It is found in the cytoplasm. Its function is as follows. The phosphoenolpyruvate-dependent sugar phosphotransferase system (sugar PTS), a major carbohydrate active transport system, catalyzes the phosphorylation of incoming sugar substrates concomitantly with their translocation across the cell membrane. The enzyme II complex composed of PtsG and Crr is involved in glucose transport. The polypeptide is PTS system glucose-specific EIIA component (crr) (Borreliella burgdorferi (strain ATCC 35210 / DSM 4680 / CIP 102532 / B31) (Borrelia burgdorferi)).